The chain runs to 881 residues: Valine--tRNA ligase (881 aa).

Positions 49–59 match the 'HIGH' region motif; the sequence is PNVTGKLHLGH. The 'KMSKS' region motif lies at 526-530; the sequence is KMSKS. An ATP-binding site is contributed by Lys529. Residues 810-881 are a coiled coil; the sequence is LADLINLDEE…VRQRLADLEK (72 aa).

This sequence belongs to the class-I aminoacyl-tRNA synthetase family. ValS type 1 subfamily. As to quaternary structure, monomer.

Its subcellular location is the cytoplasm. The enzyme catalyses tRNA(Val) + L-valine + ATP = L-valyl-tRNA(Val) + AMP + diphosphate. Functionally, catalyzes the attachment of valine to tRNA(Val). As ValRS can inadvertently accommodate and process structurally similar amino acids such as threonine, to avoid such errors, it has a 'posttransfer' editing activity that hydrolyzes mischarged Thr-tRNA(Val) in a tRNA-dependent manner. This is Valine--tRNA ligase from Bacillus thuringiensis subsp. konkukian (strain 97-27).